A 445-amino-acid polypeptide reads, in one-letter code: POU domain, class 5, transcription factor 1.2 (445 aa).

Polar residues-rich tracts occupy residues 76–88 (SANQ…QGNP) and 164–182 (IFTS…SLDN). Disordered stretches follow at residues 76-116 (SANQ…PSLP) and 139-227 (TTVV…GEME). Residues 183–200 (SRCSSATSSSSGGTNVGT) show a composition bias toward low complexity. The POU-specific domain maps to 218-292 (EEAPNSGEME…LLRSWLHEVE (75 aa)). Positions 312-371 (KRKHRTSIENNVKCTLENYFMQCSKPSAQEIAQIARELNMEKDVVRVWFCNRRQKGKRQV) form a DNA-binding region, homeobox.

Belongs to the POU transcription factor family. Class-5 subfamily. Interacts with the transcription factors tcf7l1/tcf3 and vegt. As to expression, initially (stage 9) expressed in all regions of the embryo, becoming localized to the ventroposterior regions by early neurula stages. In adults, expressed at a low level in the brain.

It is found in the nucleus. Its function is as follows. Transcription factor that binds to the octamer motif (5'-ATTTGCAT-3'). Antagonizes the activity of nodal/activin signaling during gastrulation to suppress mesendoderm formation. This chain is POU domain, class 5, transcription factor 1.2 (pou5f1.2), found in Xenopus laevis (African clawed frog).